The primary structure comprises 271 residues: Mannosyl-3-phosphoglycerate phosphatase (271 aa).

Catalysis depends on Asp-13, which acts as the Nucleophile. Mg(2+) is bound by residues Asp-13, Asp-15, and Asp-214.

This sequence belongs to the HAD-like hydrolase superfamily. MPGP family. It depends on Mg(2+) as a cofactor.

The protein resides in the cytoplasm. It catalyses the reaction 2-O-(alpha-D-mannosyl)-3-phosphoglycerate + H2O = (2R)-2-O-(alpha-D-mannosyl)-glycerate + phosphate. The polypeptide is Mannosyl-3-phosphoglycerate phosphatase (yedP) (Escherichia coli O6:K15:H31 (strain 536 / UPEC)).